The following is a 474-amino-acid chain: 6-phospho-beta-galactosidase (474 aa).

Residues Gln18, His115, Asn159, Glu160, and Asn296 each coordinate D-galactose 6-phosphate. The Proton donor role is filled by Glu160. Catalysis depends on Glu374, which acts as the Nucleophile. Residues Ser427, Trp428, Lys434, and Tyr436 each contribute to the D-galactose 6-phosphate site.

This sequence belongs to the glycosyl hydrolase 1 family.

The catalysed reaction is a 6-phospho-beta-D-galactoside + H2O = D-galactose 6-phosphate + an alcohol. It participates in carbohydrate metabolism; lactose degradation; D-galactose 6-phosphate and beta-D-glucose from lactose 6-phosphate: step 1/1. The sequence is that of 6-phospho-beta-galactosidase from Clostridium acetobutylicum (strain ATCC 824 / DSM 792 / JCM 1419 / IAM 19013 / LMG 5710 / NBRC 13948 / NRRL B-527 / VKM B-1787 / 2291 / W).